We begin with the raw amino-acid sequence, 213 residues long: tRNA (guanine-N(7)-)-methyltransferase (213 aa).

Residues Glu-44, Asp-69, Asp-96, and Asp-118 each contribute to the S-adenosyl-L-methionine site. Residue Asp-118 is part of the active site. A substrate-binding site is contributed by Lys-122. Residues 124-129 (RHEKRR) form an interaction with RNA region. Substrate is bound by residues Asp-154 and 191–194 (TEYE).

This sequence belongs to the class I-like SAM-binding methyltransferase superfamily. TrmB family.

The catalysed reaction is guanosine(46) in tRNA + S-adenosyl-L-methionine = N(7)-methylguanosine(46) in tRNA + S-adenosyl-L-homocysteine. Its pathway is tRNA modification; N(7)-methylguanine-tRNA biosynthesis. In terms of biological role, catalyzes the formation of N(7)-methylguanine at position 46 (m7G46) in tRNA. The chain is tRNA (guanine-N(7)-)-methyltransferase from Streptococcus thermophilus (strain CNRZ 1066).